Reading from the N-terminus, the 207-residue chain is Vexin (207 aa).

Positions 65-104 are disordered; sequence RDTGDRRWLQTGRLQTARPPGAHPTKTPSRPVGISEPKTS.

It belongs to the vexin family.

The protein localises to the cell membrane. It is found in the nucleus. In terms of biological role, required for neurogenesis in the neural plate and retina. Strongly cooperates with neural bHLH factors to promote neurogenesis. The polypeptide is Vexin (Mus musculus (Mouse)).